The primary structure comprises 306 residues: Homoserine kinase (306 aa).

91 to 101 (PLARGLGSSAA) lines the ATP pocket.

The protein belongs to the GHMP kinase family. Homoserine kinase subfamily.

The protein localises to the cytoplasm. The catalysed reaction is L-homoserine + ATP = O-phospho-L-homoserine + ADP + H(+). Its pathway is amino-acid biosynthesis; L-threonine biosynthesis; L-threonine from L-aspartate: step 4/5. Catalyzes the ATP-dependent phosphorylation of L-homoserine to L-homoserine phosphate. In Bacillus licheniformis (strain ATCC 14580 / DSM 13 / JCM 2505 / CCUG 7422 / NBRC 12200 / NCIMB 9375 / NCTC 10341 / NRRL NRS-1264 / Gibson 46), this protein is Homoserine kinase.